We begin with the raw amino-acid sequence, 205 residues long: Ras-related protein Rab-1A (205 aa).

The residue at position 2 (Ser2) is an N-acetylserine. 8 residues coordinate GTP: Ser20, Gly21, Gly23, Lys24, Ser25, Cys26, Glu38, and Thr43. Ser25 serves as a coordination point for Mg(2+). The Switch 1 signature appears at 34–48 (DTYTESYISTIGVDF). Position 43 (Thr43) interacts with Mg(2+). Glycyl lysine isopeptide (Lys-Gly) (interchain with G-Cter in ubiquitin) cross-links involve residues Lys49 and Lys61. Asp66 contacts Mg(2+). The Switch 2 motif lies at 66–83 (DTAGQERFRTITSSYYRG). GTP is bound by residues Gly69, Asn124, Lys125, Asp127, Ala155, and Lys156. The disordered stretch occupies residues 178–205 (PGATAGGAEKSNVKIQSTPVKQSGGGCC). Position 194 is a phosphoserine; by CDK1 (Ser194). S-geranylgeranyl cysteine attachment occurs at residues Cys204 and Cys205.

The protein belongs to the small GTPase superfamily. Rab family. May interact with YIPF5. Interacts with C9orf72; the interaction mediates recruitment of RAB1A to the ATG1/ULK1 kinase complex. Interacts with GDI1; this promotes dissociation from membranes. The cofactor is Mg(2+). Phosphorylated by CDK1 kinase during mitosis. Post-translationally, ubiquitinated via 'Lys-11'-linked ubiquitination on Lys-49 and Lys-61; impairing the recruitment of guanosine diphosphate (GDP) dissociation inhibitor 1/GDI1.

It localises to the golgi apparatus. The protein localises to the endoplasmic reticulum. The protein resides in the early endosome. It is found in the cytoplasm. Its subcellular location is the cytosol. It localises to the membrane. The protein localises to the melanosome. It carries out the reaction GTP + H2O = GDP + phosphate + H(+). With respect to regulation, regulated by guanine nucleotide exchange factors (GEFs) which promote the exchange of bound GDP for free GTP. Regulated by GTPase activating proteins (GAPs) which increase the GTP hydrolysis activity. Inhibited by GDP dissociation inhibitors (GDIs). In terms of biological role, the small GTPases Rab are key regulators of intracellular membrane trafficking, from the formation of transport vesicles to their fusion with membranes. Rabs cycle between an inactive GDP-bound form and an active GTP-bound form that is able to recruit to membranes different sets of downstream effectors directly responsible for vesicle formation, movement, tethering and fusion. RAB1A regulates vesicular protein transport from the endoplasmic reticulum (ER) to the Golgi compartment and on to the cell surface, and plays a role in IL-8 and growth hormone secretion. Required to modulate the compacted morphology of the Golgi. Regulates the level of CASR present at the cell membrane. Plays a role in cell adhesion and cell migration, via its role in protein trafficking. Plays a role in autophagosome assembly and cellular defense reactions against pathogenic bacteria. Plays a role in microtubule-dependent protein transport by early endosomes and in anterograde melanosome transport. The protein is Ras-related protein Rab-1A (RAB1A) of Sus scrofa (Pig).